The primary structure comprises 326 residues: Thiazole synthase (326 aa).

Lysine 168 (schiff-base intermediate with DXP) is an active-site residue. 1-deoxy-D-xylulose 5-phosphate-binding positions include glycine 229, alanine 255–glycine 256, and asparagine 277–threonine 278.

The protein belongs to the ThiG family. In terms of assembly, homotetramer. Forms heterodimers with either ThiH or ThiS.

It is found in the cytoplasm. It catalyses the reaction [ThiS sulfur-carrier protein]-C-terminal-Gly-aminoethanethioate + 2-iminoacetate + 1-deoxy-D-xylulose 5-phosphate = [ThiS sulfur-carrier protein]-C-terminal Gly-Gly + 2-[(2R,5Z)-2-carboxy-4-methylthiazol-5(2H)-ylidene]ethyl phosphate + 2 H2O + H(+). Its pathway is cofactor biosynthesis; thiamine diphosphate biosynthesis. Catalyzes the rearrangement of 1-deoxy-D-xylulose 5-phosphate (DXP) to produce the thiazole phosphate moiety of thiamine. Sulfur is provided by the thiocarboxylate moiety of the carrier protein ThiS. In vitro, sulfur can be provided by H(2)S. This is Thiazole synthase from Magnetococcus marinus (strain ATCC BAA-1437 / JCM 17883 / MC-1).